We begin with the raw amino-acid sequence, 609 residues long: UvrABC system protein C (609 aa).

One can recognise a GIY-YIG domain in the interval 16–94; sequence SSAGVYRMYD…IKQYMPKYNV (79 aa). Residues 203 to 238 form the UVR domain; sequence KQVISELVAKMEEAAEQQAYEQAARFRDQIMALRRV.

Belongs to the UvrC family. In terms of assembly, interacts with UvrB in an incision complex.

It localises to the cytoplasm. Functionally, the UvrABC repair system catalyzes the recognition and processing of DNA lesions. UvrC both incises the 5' and 3' sides of the lesion. The N-terminal half is responsible for the 3' incision and the C-terminal half is responsible for the 5' incision. This is UvrABC system protein C from Shewanella sp. (strain MR-4).